Reading from the N-terminus, the 224-residue chain is Heme response regulator HssR (224 aa).

A Response regulatory domain is found at 3–116 (QCLVVDDDPR…ELIFRIRAVL (114 aa)). A 4-aspartylphosphate modification is found at D52. Positions 124 to 222 (NSEMTIGNLT…VRGQGYKVEN (99 aa)) form a DNA-binding region, ompR/PhoB-type.

Phosphorylated by HssS.

Its subcellular location is the cytoplasm. Its function is as follows. Member of the two-component regulatory system HssS/HssR involved in intracellular heme homeostasis and tempering of staphylococcal virulence. Phosphorylated HssR binds to a direct repeat sequence within hrtAB promoter and activates the expression of hrtAB, an efflux pump, in response to extracellular heme, hemin, hemoglobin or blood. The chain is Heme response regulator HssR (hssR) from Staphylococcus aureus (strain COL).